The sequence spans 297 residues: uncharacterized protein (297 aa).

The interval Phe136–Lys174 is disordered. The span at Thr139–Asn170 shows a compositional bias: acidic residues.

It to S.pombe SpBC725.03.

This is an uncharacterized protein from Saccharomyces cerevisiae (strain ATCC 204508 / S288c) (Baker's yeast).